A 209-amino-acid polypeptide reads, in one-letter code: Dual specificity phosphatase 29 (209 aa).

A Tyrosine-protein phosphatase domain is found at 44 to 193; the sequence is NHVNEVWPNL…LRELDIQLAL (150 aa). 137 to 144 serves as a coordination point for substrate; sequence NCAMGRSR. Catalysis depends on C138, which acts as the Phosphocysteine intermediate.

This sequence belongs to the protein-tyrosine phosphatase family. Non-receptor class dual specificity subfamily.

It localises to the cytoplasm. Its subcellular location is the nucleus. The enzyme catalyses O-phospho-L-tyrosyl-[protein] + H2O = L-tyrosyl-[protein] + phosphate. It carries out the reaction O-phospho-L-seryl-[protein] + H2O = L-seryl-[protein] + phosphate. It catalyses the reaction O-phospho-L-threonyl-[protein] + H2O = L-threonyl-[protein] + phosphate. Dual specificity phosphatase able to dephosphorylate phosphotyrosine, phosphoserine and phosphothreonine residues within the same substrate, with a preference for phosphotyrosine as a substrate. Involved in the modulation of AMPK and MAPK1/2 signaling pathways. This Xenopus tropicalis (Western clawed frog) protein is Dual specificity phosphatase 29 (dusp29).